Here is a 424-residue protein sequence, read N- to C-terminus: Acetyl-CoA acetyltransferase, mitochondrial (424 aa).

A mitochondrion-targeting transit peptide spans M1 to Y30. The residue at position 63 (K63) is an N6-acetyllysine; alternate. The residue at position 63 (K63) is an N6-succinyllysine; alternate. K75 is modified (N6-succinyllysine). C123 acts as the Acyl-thioester intermediate in catalysis. K171, K178, K187, and K199 each carry N6-acetyllysine; alternate. 4 positions are modified to N6-succinyllysine; alternate: K171, K178, K187, and K199. A Phosphoserine modification is found at S204. CoA is bound at residue Y216. Y216 serves as a coordination point for K(+). N6-acetyllysine; alternate is present on residues K220 and K227. An N6-succinyllysine; alternate mark is found at K220 and K227. K240 carries the post-translational modification N6-succinyllysine. The residue at position 242 (K242) is an N6-acetyllysine; alternate. Residue K242 is modified to N6-succinyllysine; alternate. N6-acetyllysine occurs at positions 248 and 254. CoA-binding positions include R255–D257 and K260. The residue at position 260 (K260) is an N6-acetyllysine; alternate. K260 is subject to N6-succinyllysine; alternate. N6-succinyllysine is present on residues K263 and K265. Residue K270 is modified to N6-acetyllysine. The K(+) site is built by A277, A278, and A280. S281 is a CoA binding site. K335 carries the N6-acetyllysine modification. Residue V378 participates in K(+) binding. C410 (proton donor/acceptor) is an active-site residue.

Belongs to the thiolase-like superfamily. Thiolase family. As to quaternary structure, homotetramer. Succinylation at Lys-265, adjacent to a coenzyme A binding site. Desuccinylated by SIRT5.

The protein localises to the mitochondrion. The enzyme catalyses 2 acetyl-CoA = acetoacetyl-CoA + CoA. The catalysed reaction is propanoyl-CoA + acetyl-CoA = 2-methyl-3-oxobutanoyl-CoA + CoA. It functions in the pathway lipid metabolism; fatty acid beta-oxidation. Its activity is regulated as follows. Activated by potassium ions, but not sodium ions. In terms of biological role, this is one of the enzymes that catalyzes the last step of the mitochondrial beta-oxidation pathway, an aerobic process breaking down fatty acids into acetyl-CoA. Using free coenzyme A/CoA, catalyzes the thiolytic cleavage of medium- to long-chain 3-oxoacyl-CoAs into acetyl-CoA and a fatty acyl-CoA shortened by two carbon atoms. The activity of the enzyme is reversible and it can also catalyze the condensation of two acetyl-CoA molecules into acetoacetyl-CoA. Thereby, it plays a major role in ketone body metabolism. The sequence is that of Acetyl-CoA acetyltransferase, mitochondrial (Acat1) from Mus musculus (Mouse).